A 131-amino-acid chain; its full sequence is MSNVPTELKYTASHEWVLNEGDGVYCVGITEHAQELLGDMVFMDLPEVGATFSAGEDCAVAESVKAASDIYAPISGEIVAVNDDLEASPELVNSAPYTDGWLFKIKATDDSEVNELLDAAAYQAAIDEEDE.

One can recognise a Lipoyl-binding domain in the interval 24–106 (VYCVGITEHA…YTDGWLFKIK (83 aa)). Lysine 65 is modified (N6-lipoyllysine).

This sequence belongs to the GcvH family. The glycine cleavage system is composed of four proteins: P, T, L and H. It depends on (R)-lipoate as a cofactor.

The glycine cleavage system catalyzes the degradation of glycine. The H protein shuttles the methylamine group of glycine from the P protein to the T protein. The chain is Glycine cleavage system H protein from Sodalis glossinidius (strain morsitans).